The sequence spans 115 residues: uncharacterized protein (115 aa).

The segment at 9-30 is disordered; that stretch reads EGLRERGASGKNEQKKKKKEKI.

This is an uncharacterized protein from Saccharomyces cerevisiae (strain ATCC 204508 / S288c) (Baker's yeast).